The primary structure comprises 542 residues: CTP synthase (542 aa).

Positions 1 to 265 (MTRYIFVTGG…DQLVIERFGL (265 aa)) are amidoligase domain. Residue serine 13 participates in CTP binding. Serine 13 provides a ligand contact to UTP. ATP-binding positions include 14-19 (SLGKGI) and aspartate 71. Positions 71 and 139 each coordinate Mg(2+). Residues 146-148 (DIE), 186-191 (KTKPTQ), and lysine 222 contribute to the CTP site. Residues 186-191 (KTKPTQ) and lysine 222 each bind UTP. Positions 290–541 (TIAMVGKYME…VEAALANKKG (252 aa)) constitute a Glutamine amidotransferase type-1 domain. Residue glycine 351 participates in L-glutamine binding. The active-site Nucleophile; for glutamine hydrolysis is the cysteine 378. L-glutamine-binding positions include 379–382 (LGMQ), glutamate 402, and arginine 469. Active-site residues include histidine 514 and glutamate 516.

It belongs to the CTP synthase family. As to quaternary structure, homotetramer.

The catalysed reaction is UTP + L-glutamine + ATP + H2O = CTP + L-glutamate + ADP + phosphate + 2 H(+). It catalyses the reaction L-glutamine + H2O = L-glutamate + NH4(+). It carries out the reaction UTP + NH4(+) + ATP = CTP + ADP + phosphate + 2 H(+). The protein operates within pyrimidine metabolism; CTP biosynthesis via de novo pathway; CTP from UDP: step 2/2. With respect to regulation, allosterically activated by GTP, when glutamine is the substrate; GTP has no effect on the reaction when ammonia is the substrate. The allosteric effector GTP functions by stabilizing the protein conformation that binds the tetrahedral intermediate(s) formed during glutamine hydrolysis. Inhibited by the product CTP, via allosteric rather than competitive inhibition. In terms of biological role, catalyzes the ATP-dependent amination of UTP to CTP with either L-glutamine or ammonia as the source of nitrogen. Regulates intracellular CTP levels through interactions with the four ribonucleotide triphosphates. This chain is CTP synthase, found in Marinobacter nauticus (strain ATCC 700491 / DSM 11845 / VT8) (Marinobacter aquaeolei).